The chain runs to 130 residues: MAQVQYYGTGRRKSSVARVRLVPGEGRIVVNNREITEYIPFAALIEDVKQPLNITETANSYDVLVTVHGGGFSGQAGAIRHGISRALLEVDPEYRTSLKRAGLLTRDPRMKERKKYGLKGARRAPQFSKR.

The interval 105–130 is disordered; that stretch reads TRDPRMKERKKYGLKGARRAPQFSKR. Positions 111-130 are enriched in basic residues; it reads KERKKYGLKGARRAPQFSKR.

The protein belongs to the universal ribosomal protein uS9 family.

This Bacillus pumilus (strain SAFR-032) protein is Small ribosomal subunit protein uS9.